Reading from the N-terminus, the 340-residue chain is Ribonucleoside-diphosphate reductase subunit beta (340 aa).

Asp-88 and His-122 together coordinate Fe cation. Residue Tyr-126 is part of the active site. His-216 contacts Fe cation.

The protein belongs to the ribonucleoside diphosphate reductase small chain family. In terms of assembly, tetramer of two alpha and two beta subunits. Requires Fe cation as cofactor.

It catalyses the reaction a 2'-deoxyribonucleoside 5'-diphosphate + [thioredoxin]-disulfide + H2O = a ribonucleoside 5'-diphosphate + [thioredoxin]-dithiol. Provides the precursors necessary for DNA synthesis. Catalyzes the biosynthesis of deoxyribonucleotides from the corresponding ribonucleotides. The sequence is that of Ribonucleoside-diphosphate reductase subunit beta (nrdF) from Mycoplasma genitalium (strain ATCC 33530 / DSM 19775 / NCTC 10195 / G37) (Mycoplasmoides genitalium).